The primary structure comprises 101 residues: Small ribosomal subunit protein uS14 (101 aa).

It belongs to the universal ribosomal protein uS14 family. Part of the 30S ribosomal subunit. Contacts proteins S3 and S10.

In terms of biological role, binds 16S rRNA, required for the assembly of 30S particles and may also be responsible for determining the conformation of the 16S rRNA at the A site. In Caulobacter vibrioides (strain ATCC 19089 / CIP 103742 / CB 15) (Caulobacter crescentus), this protein is Small ribosomal subunit protein uS14.